Reading from the N-terminus, the 313-residue chain is uncharacterized protein (313 aa).

Ala-29–Asp-61 contributes to the NADP(+) binding site.

It belongs to the short-chain dehydrogenases/reductases (SDR) family. 2,4-dienoyl-CoA reductase subfamily.

This is an uncharacterized protein from Caenorhabditis elegans.